The chain runs to 344 residues: Serine/threonine-protein kinase ppk13 (344 aa).

ATP-binding positions include 38 to 46 (LGEGGFAFV) and lysine 61. Residues 76–344 (MKEADYHRKF…LSKIDLQINQ (269 aa)) enclose the Protein kinase domain. Histidine 192 (proton acceptor) is an active-site residue.

Belongs to the protein kinase superfamily. Ser/Thr protein kinase family.

The protein resides in the endoplasmic reticulum. It localises to the golgi apparatus. The enzyme catalyses L-seryl-[protein] + ATP = O-phospho-L-seryl-[protein] + ADP + H(+). The catalysed reaction is L-threonyl-[protein] + ATP = O-phospho-L-threonyl-[protein] + ADP + H(+). The chain is Serine/threonine-protein kinase ppk13 (ppk13) from Schizosaccharomyces pombe (strain 972 / ATCC 24843) (Fission yeast).